The chain runs to 241 residues: Uridylate kinase (241 aa).

14 to 17 lines the ATP pocket; the sequence is KASG. An involved in allosteric activation by GTP region spans residues 22-27; sequence GDQGFG. Glycine 56 contributes to the UMP binding site. Glycine 57 and arginine 61 together coordinate ATP. UMP is bound by residues aspartate 76 and 137 to 144; that span reads TGNPFFTT. Positions 164, 165, 170, and 173 each coordinate ATP.

The protein belongs to the UMP kinase family. Homohexamer.

It localises to the cytoplasm. It carries out the reaction UMP + ATP = UDP + ADP. It participates in pyrimidine metabolism; CTP biosynthesis via de novo pathway; UDP from UMP (UMPK route): step 1/1. With respect to regulation, allosterically activated by GTP. Inhibited by UTP. Catalyzes the reversible phosphorylation of UMP to UDP. The sequence is that of Uridylate kinase from Agrobacterium fabrum (strain C58 / ATCC 33970) (Agrobacterium tumefaciens (strain C58)).